The following is a 475-amino-acid chain: ADP-ribosyltransferase toxin AexT (475 aa).

The Bacterial Rho-GAP domain maps to V93 to A226. Residues E260–E436 enclose the TR mART core domain. Residues R340, S364, and E403 contribute to the active site.

The protein resides in the secreted. In terms of biological role, directly involved in the toxicity for RTG-2 (rainbow trout gonad) fish cells. The sequence is that of ADP-ribosyltransferase toxin AexT (aexT) from Aeromonas salmonicida.